The primary structure comprises 541 residues: Membrane protein insertase YidC (541 aa).

5 consecutive transmembrane segments (helical) span residues 7 to 27 (LLFM…QVDY), 345 to 365 (LVQN…AVLY), 415 to 435 (LGGC…YWTF), 453 to 473 (LSAQ…MFLL), and 492 to 512 (FMPL…VLYW).

The protein belongs to the OXA1/ALB3/YidC family. Type 1 subfamily. As to quaternary structure, interacts with the Sec translocase complex via SecD. Specifically interacts with transmembrane segments of nascent integral membrane proteins during membrane integration.

It localises to the cell inner membrane. Its function is as follows. Required for the insertion and/or proper folding and/or complex formation of integral membrane proteins into the membrane. Involved in integration of membrane proteins that insert both dependently and independently of the Sec translocase complex, as well as at least some lipoproteins. Aids folding of multispanning membrane proteins. The sequence is that of Membrane protein insertase YidC from Histophilus somni (strain 2336) (Haemophilus somnus).